The sequence spans 485 residues: MQLYNTLTRKKEHFEPAVPGKVNMYVCGITAYDLCHIGHARSAVVFDVLVRYLRHTGLDVTFARNFTDVDDKIITRANQEGLTSQEVAEKYIATFYEDMDRLNVLRADLEPRATTHIEEMISLCVRLIEQDKAYATPSGDVYFRVRAFPGYGKLSGRDVDDLRSGARVAPGEEKEDPLDFALWKAAKPGEPFWESPWGNGRPGWHIECSAMSEKHLPLPLDIHGGGQDLVFPHHENEIAQTEAALGKDFVRYWVHNGFVQVNAEKMSKSLGNFRTIRDILENYLPETLRYFLLTKHYRSPIDFTFESMDEAEKNLKRIYEALGLLHAELEREKWTSGPLPKDVTEEFEGLRQAFADAMEDDMNTAAALGHVFTMVRLANRILDNKGQRKTEGARAFFRAVLDEAATWFAVLGVFGREPAGFLAELRACRVARKGIDPAKVEELLQARINARADKDFARADAIRDEIAALGIEVRDTPSGAVWDVL.

Zn(2+) is bound at residue cysteine 27. A 'HIGH' region motif is present at residues 29-39; the sequence is ITAYDLCHIGH. Residues cysteine 208, histidine 233, and glutamate 237 each contribute to the Zn(2+) site. The short motif at 265-269 is the 'KMSKS' region element; that stretch reads KMSKS. Lysine 268 is a binding site for ATP.

It belongs to the class-I aminoacyl-tRNA synthetase family. Monomer. It depends on Zn(2+) as a cofactor.

Its subcellular location is the cytoplasm. It catalyses the reaction tRNA(Cys) + L-cysteine + ATP = L-cysteinyl-tRNA(Cys) + AMP + diphosphate. This is Cysteine--tRNA ligase from Nitratidesulfovibrio vulgaris (strain DSM 19637 / Miyazaki F) (Desulfovibrio vulgaris).